Consider the following 960-residue polypeptide: Semaphorin-6C (960 aa).

Positions 1 to 23 (MPRAPHSMPLLLLLLLSLPQAQT) are cleaved as a signal peptide. At 24–635 (AFPQDPIPLL…ASASRSIPIP (612 aa)) the chain is on the extracellular side. One can recognise a Sema domain in the interval 29 to 515 (PIPLLTSDLQ…FPGCIVYLSL (487 aa)). An N-linked (GlcNAc...) asparagine glycan is attached at Asn69. Intrachain disulfides connect Cys110–Cys120, Cys138–Cys147, Cys261–Cys372, and Cys286–Cys331. Asn285 is a glycosylation site (N-linked (GlcNAc...) asparagine). N-linked (GlcNAc...) asparagine glycosylation occurs at Asn436. 4 disulfides stabilise this stretch: Cys478–Cys509, Cys518–Cys536, Cys524–Cys569, and Cys528–Cys544. Positions 555–624 (VDLTGNQESM…HTQGVRRDLS (70 aa)) are disordered. Residues 636 to 656 (LLLACVAAAFALGASVSGLLV) form a helical membrane-spanning segment. Residues 657 to 960 (SCACRRANRR…PAPHGSHFNF (304 aa)) lie on the Cytoplasmic side of the membrane. 3 disordered regions span residues 685–725 (LARL…SPPE), 745–792 (ASGG…PGQE), and 806–960 (HGPQ…HFNF). A compositionally biased stretch (low complexity) spans 899 to 909 (RVPSGGPSRYS). Over residues 922–935 (PDGHRGRSLKRVDV) the composition is skewed to basic and acidic residues. The span at 940-952 (SPKPPLATPPQPA) shows a compositional bias: pro residues.

The protein belongs to the semaphorin family. As to expression, expressed in many regions of the developing nervous system, probably in neurons and their precursors, but also in nonneural tissue such as immature muscle and dermis. In adult, strong expression in the skeletal muscle and moderate expression in the brain, where cerebellum shows the highest expression. Also expressed in almost all areas of the CNS.

It localises to the cell membrane. Functionally, shows growth cone collapsing activity on dorsal root ganglion (DRG) neurons in vitro. May be a stop signal for the DRG neurons in their target areas, and possibly also for other neurons. May also be involved in the maintenance and remodeling of neuronal connections. In Rattus norvegicus (Rat), this protein is Semaphorin-6C (Sema6c).